The sequence spans 128 residues: Global transcriptional regulator Spx 1 (128 aa).

An intrachain disulfide couples Cys-10 to Cys-13.

The protein belongs to the ArsC family. Spx subfamily. As to quaternary structure, interacts with the C-terminal domain of the alpha subunit of the RNAP.

The protein resides in the cytoplasm. In terms of biological role, global transcriptional regulator that plays a key role in stress response and exerts either positive or negative regulation of genes. Acts by interacting with the C-terminal domain of the alpha subunit of the RNA polymerase (RNAP). This interaction can enhance binding of RNAP to the promoter region of target genes and stimulate their transcription, or block interaction of RNAP with activator. In Lactococcus lactis subsp. lactis (strain IL1403) (Streptococcus lactis), this protein is Global transcriptional regulator Spx 1.